A 258-amino-acid polypeptide reads, in one-letter code: Phosphate import ATP-binding protein PstB (258 aa).

The ABC transporter domain occupies 5 to 253; the sequence is LDLNDVNIYY…PTKKETEDYI (249 aa). 37–44 serves as a coordination point for ATP; sequence GPSGCGKS.

The protein belongs to the ABC transporter superfamily. Phosphate importer (TC 3.A.1.7) family. As to quaternary structure, the complex is composed of two ATP-binding proteins (PstB), two transmembrane proteins (PstC and PstA) and a solute-binding protein (PstS).

Its subcellular location is the cell membrane. The catalysed reaction is phosphate(out) + ATP + H2O = ADP + 2 phosphate(in) + H(+). Part of the ABC transporter complex PstSACB involved in phosphate import. Responsible for energy coupling to the transport system. The chain is Phosphate import ATP-binding protein PstB from Corynebacterium jeikeium (strain K411).